A 630-amino-acid polypeptide reads, in one-letter code: Long-chain-fatty-acid--AMP ligase FadD32 (630 aa).

ATP contacts are provided by residues 187–192 (TSGSTR), Ser342, Ala346, Asp469, and Arg483.

This sequence belongs to the ATP-dependent AMP-binding enzyme family. In terms of assembly, monomer.

The catalysed reaction is a long-chain fatty acid + holo-[ACP] + ATP = a long-chain fatty acyl-[ACP] + AMP + diphosphate. The enzyme catalyses decanoate + ATP + H(+) = decanoyl-AMP + diphosphate. It carries out the reaction dodecanoate + ATP + H(+) = dodecanoyl-AMP + diphosphate. It catalyses the reaction tetradecanoate + ATP + H(+) = tetradecanoyl-AMP + diphosphate. It participates in lipid metabolism; mycolic acid biosynthesis. The acyl-AMP ligase activity is inhibited by the alkylphosphate ester of AMP, adenosine 50-dodecylphosphate (AMPC12). Also inhibited by eicosyl-AMP (AMPC20). Its function is as follows. Involved in the biosynthesis of mycolic acids. Catalyzes the activation of long-chain fatty acids as acyl-adenylates (acyl-AMP), which are then transferred to the phosphopantetheine arm of the polyketide synthase Pks13 for further chain extension. Can use decanoate (C10), dodecanoate (C12) and tetradecanoate (C14). The chain is Long-chain-fatty-acid--AMP ligase FadD32 from Mycolicibacterium smegmatis (strain ATCC 700084 / mc(2)155) (Mycobacterium smegmatis).